Consider the following 317-residue polypeptide: Ribosomal RNA small subunit methyltransferase A (317 aa).

S-adenosyl-L-methionine contacts are provided by asparagine 37, valine 39, glycine 64, glutamate 85, aspartate 115, and asparagine 134. A disordered region spans residues 293-317 (GGSDEATSTGRDARAPDISGHASAS).

The protein belongs to the class I-like SAM-binding methyltransferase superfamily. rRNA adenine N(6)-methyltransferase family. RsmA subfamily.

It localises to the cytoplasm. The enzyme catalyses adenosine(1518)/adenosine(1519) in 16S rRNA + 4 S-adenosyl-L-methionine = N(6)-dimethyladenosine(1518)/N(6)-dimethyladenosine(1519) in 16S rRNA + 4 S-adenosyl-L-homocysteine + 4 H(+). In terms of biological role, specifically dimethylates two adjacent adenosines (A1518 and A1519) in the loop of a conserved hairpin near the 3'-end of 16S rRNA in the 30S particle. May play a critical role in biogenesis of 30S subunits. This is Ribosomal RNA small subunit methyltransferase A from Mycobacterium bovis (strain BCG / Tokyo 172 / ATCC 35737 / TMC 1019).